The following is a 282-amino-acid chain: Undecaprenyl-diphosphatase 1 (282 aa).

The next 8 membrane-spanning stretches (helical) occupy residues 1-21, 46-66, 91-111, 117-137, 150-170, 193-213, 226-246, and 260-280; these read MLLLQIVVLALIQGITEVLPL, GVALDVAVHLGTLGAVALYFW, AFLVVLGTLPAVATVLLLAHF, SPGLATIGWTTLGFGLLLGVI, MGGIDCLLIGLAQCLALLPGV, FSMLLSIPAIAGAATLVGLDL, LIAAVTAFLAAFLAVAAMMAW, and VLLGAALLALAYLGPDLAPFL.

Belongs to the UppP family.

The protein resides in the cell inner membrane. The enzyme catalyses di-trans,octa-cis-undecaprenyl diphosphate + H2O = di-trans,octa-cis-undecaprenyl phosphate + phosphate + H(+). Functionally, catalyzes the dephosphorylation of undecaprenyl diphosphate (UPP). Confers resistance to bacitracin. This chain is Undecaprenyl-diphosphatase 1, found in Rhodospirillum rubrum (strain ATCC 11170 / ATH 1.1.1 / DSM 467 / LMG 4362 / NCIMB 8255 / S1).